Reading from the N-terminus, the 283-residue chain is Tetraspanin-33 (283 aa).

Residues methionine 1–tyrosine 24 lie on the Cytoplasmic side of the membrane. A helical membrane pass occupies residues leucine 25–valine 45. Over tyrosine 46 to proline 64 the chain is Extracellular. A helical transmembrane segment spans residues alanine 65–glycine 85. Over serine 86–threonine 96 the chain is Cytoplasmic. Residues phenylalanine 97–valine 117 traverse the membrane as a helical segment. Over phenylalanine 118–asparagine 235 the chain is Extracellular. Intrachain disulfides connect cysteine 156-cysteine 224, cysteine 157-cysteine 189, cysteine 173-cysteine 183, and cysteine 190-cysteine 203. Asparagine 172 carries an N-linked (GlcNAc...) asparagine glycan. The helical transmembrane segment at leucine 236 to leucine 256 threads the bilayer. Topologically, residues serine 257–tyrosine 283 are cytoplasmic.

It belongs to the tetraspanin (TM4SF) family. In terms of assembly, homodimer; disulfide-linked. Interacts (via extracellular domain) with ADAM10 (via extracellular domain). Interacts (via cytoplasmic domain) with PLEKHA7 (via WW domains); the interaction is dependent on PDZD11 being bound to PLEKHA7 and facilitates the docking of ADAM10 to zonula adherens. Predominantly expressed in erythroblasts.

The protein resides in the cell membrane. It localises to the cell junction. The protein localises to the adherens junction. Its subcellular location is the cytoplasm. Functionally, part of TspanC8 subgroup, composed of 6 members that interact with the transmembrane metalloprotease ADAM10. This interaction is required for ADAM10 exit from the endoplasmic reticulum and for enzymatic maturation and trafficking to the cell surface as well as substrate specificity. Different TspanC8/ADAM10 complexes have distinct substrates. Plays an important role in normal erythropoiesis. It has a role in the differentiation of erythroid progenitors. Negatively regulates ligand-induced Notch activity probably by regulating ADAM10 activity. Mediates docking of ADAM10 to zonula adherens by interacting with ADAM10 and, in a PDZD11-dependent manner, with the zonula adherens protein PLEKHA7. The protein is Tetraspanin-33 (Tspan33) of Mus musculus (Mouse).